The sequence spans 188 residues: Elongation factor P (188 aa).

Belongs to the elongation factor P family.

Its subcellular location is the cytoplasm. Its pathway is protein biosynthesis; polypeptide chain elongation. Functionally, involved in peptide bond synthesis. Stimulates efficient translation and peptide-bond synthesis on native or reconstituted 70S ribosomes in vitro. Probably functions indirectly by altering the affinity of the ribosome for aminoacyl-tRNA, thus increasing their reactivity as acceptors for peptidyl transferase. The sequence is that of Elongation factor P from Pseudomonas aeruginosa (strain LESB58).